A 375-amino-acid polypeptide reads, in one-letter code: DNA replication and repair protein RecF (375 aa).

30 to 37 is a binding site for ATP; the sequence is GENAQGKT.

The protein belongs to the RecF family.

Its subcellular location is the cytoplasm. Its function is as follows. The RecF protein is involved in DNA metabolism; it is required for DNA replication and normal SOS inducibility. RecF binds preferentially to single-stranded, linear DNA. It also seems to bind ATP. The polypeptide is DNA replication and repair protein RecF (Enterococcus faecalis (strain ATCC 700802 / V583)).